The sequence spans 192 residues: ATP synthase protein MI25 (192 aa).

The chain crosses the membrane as a helical span at residues 29 to 49; the sequence is ISIYNEEMIVARCFIGFLIFS.

Belongs to the ATPase protein MI25 family. As to quaternary structure, F-type ATPases have 2 components, CF(1) - the catalytic core - and CF(0) - the membrane proton channel. CF(1) has five subunits: alpha(3), beta(3), gamma(1), delta(1), epsilon(1). CF(0) has three main subunits: a, b and c.

The protein localises to the mitochondrion membrane. This is one of the chains of the nonenzymatic component (CF(0) subunit) of the mitochondrial ATPase complex. This is ATP synthase protein MI25 from Triticum timopheevii (Timopheev's wheat).